The sequence spans 1674 residues: Kinesin-like protein KIF14 (1674 aa).

The interval 1 to 391 is required for PRC1-binding; the sequence is MSVHTSHSRH…TEPDSLKVEN (391 aa). Disordered regions lie at residues 132–158 and 171–374; these read ETLNPVGGNPGSDSASQASRTEAKGVN and KDSN…PEEN. 2 stretches are compositionally biased toward polar residues: residues 142–151 and 202–214; these read GSDSASQASR and SRAPVGSQRQTEA. Residue Ser257 is modified to Phosphoserine. Position 262 is a phosphothreonine (Thr262). Positions 267–279 are enriched in basic and acidic residues; sequence VLEHRWTPRHDPP. The span at 302–311 shows a compositional bias: polar residues; that stretch reads TFRSASSESR. The span at 317 to 329 shows a compositional bias: basic and acidic residues; that stretch reads VPEHRWTPRHDLP. A required for microtubule-binding with high affinity region spans residues 391–772; the sequence is NSQVTVAVRV…AAQRSNRNID (382 aa). The region spanning 393–736 is the Kinesin motor domain; it reads QVTVAVRVRP…LRYATQARLI (344 aa). 482 to 489 contributes to the ATP binding site; it reads GQTGSGKS. Residues 743-826 are a coiled coil; it reads NEDMNAKLIR…QETKELQKAG (84 aa). An FHA domain is found at 860–911; that stretch reads TTVGKHTPSSSHDIQLSGVLIADDHCTIRNFGGTVSIVPAGEAKTYVNGTHI. A required for CIT-binding region spans residues 936-1674; it reads PVEVQKGKKL…DCTPNRIQWV (739 aa). A coiled-coil region spans residues 961–1110; sequence EFAKNELLTA…VQMLQENRGN (150 aa). 2 positions are modified to phosphoserine: Ser973 and Ser1326. Positions 1618–1674 are disordered; the sequence is GLSKPWESCSSNSKEEQCKSDRADCGKSGPRRACEPHGDATPAVSSGDCTPNRIQWV. A compositionally biased stretch (basic and acidic residues) spans 1630 to 1642; the sequence is SKEEQCKSDRADC. Residues 1660-1674 are compositionally biased toward polar residues; that stretch reads AVSSGDCTPNRIQWV.

Belongs to the TRAFAC class myosin-kinesin ATPase superfamily. Kinesin family. As to quaternary structure, directly interacts with PRC1 within a complex also containing KIF4A, KIF20A and KIF23; targets to the central spindle. Directly interacts with CIT depending on the activation state of the kinase (stronger interaction with the kinase-dead form); targets to the midbody. Interacts with ARRB2; the interaction is detected in the nucleus upon OR1D2 stimulation. Interacts with AKT1; the interaction is detected in the plasma membrane upon INS stimulation and promotes AKT1 phosphorylation. Interacts with SVIL; at midbody during cytokinesis. Interacts with RADIL (via PDZ domain); recruits RADIL to the microtubule network restricting RADIL from interaction with activated RAP1A.

Its subcellular location is the nucleus. The protein resides in the cytoplasm. The protein localises to the cytoskeleton. It localises to the spindle. It is found in the midbody. Its function is as follows. Microtubule motor protein that binds to microtubules with high affinity through each tubulin heterodimer and has an ATPase activity. Plays a role in many processes like cell division, cytokinesis and also in cell proliferation and apoptosis. During cytokinesis, targets to central spindle and midbody through its interaction with PRC1 and CIT respectively. Regulates cell growth through regulation of cell cycle progression and cytokinesis. During cell cycle progression acts through SCF-dependent proteasomal ubiquitin-dependent protein catabolic process which controls CDKN1B degradation, resulting in positive regulation of cyclins, including CCNE1, CCND1 and CCNB1. During late neurogenesis, regulates the cerebellar and cerebral cortex development and olfactory bulb development through regulation of apoptosis, cell proliferation and cell division. Also is required for chromosome congression and alignment during mitotic cell cycle process. Regulates cell spreading, focal adhesion dynamics, and cell migration through its interaction with RADIL resulting in regulation of RAP1A-mediated inside-out integrin activation by tethering RADIL on microtubules. In Mus musculus (Mouse), this protein is Kinesin-like protein KIF14.